The chain runs to 249 residues: Protein-lysine 6-oxidase (249 aa).

Sulfotyrosine is present on Tyr-19. The segment at 45–249 is lysyl-oxidase like; that stretch reads PDLVPDPYYI…YASGCTISPY (205 aa). Cystine bridges form between Cys-70–Cys-76, Cys-123–Cys-172, Cys-156–Cys-162, Cys-183–Cys-193, and Cys-230–Cys-244. Positions 124, 126, and 128 each coordinate Cu cation. Residues 152 to 187 constitute a cross-link (lysine tyrosylquinone (Lys-Tyr)); that stretch reads KASFCLEDTSCDYGYHRRFACTAHTQGLSPGCYDTY. Position 187 is a 2',4',5'-topaquinone (Tyr-187).

This sequence belongs to the lysyl oxidase family. Interacts with MFAP4. Interacts (via propeptide) with EFEMP2; this interaction is strong and facilitates formation of ternary complexes with ELN during elastic fiber assembly; this interaction limits interaction of EFEMP2 with FBLN5. It depends on Cu cation as a cofactor. The cofactor is lysine tyrosylquinone residue. The lysine tyrosylquinone cross-link (LTQ) is generated by condensation of the epsilon-amino group of a lysine with a topaquinone produced by oxidation of tyrosine. In terms of processing, proteolytically cleaved by BMP1 which removes the propeptide. Also proteolytically cleaved by ADAMTS2 and ADAMTS14, but not by ADAMTS3, at an additional cleavage site downstream of the BMP1 cleavage site. The propeptide plays a role in directing the deposition of this enzyme to elastic fibers, via interaction with tropoelastin. Cleavage by BMP1 to remove the propeptide does not increase enzymatic activity but increases binding to collagen. Cleavage by ADAMTS2 produces a form with reduced collagen-binding activity. Post-translationally, sulfated at Tyr-19 and also at either Tyr-15 or Tyr-16 which enhances binding to collagen.

The protein resides in the secreted. It localises to the extracellular space. The enzyme catalyses L-lysyl-[protein] + O2 + H2O = (S)-2-amino-6-oxohexanoyl-[protein] + H2O2 + NH4(+). Functionally, responsible for the post-translational oxidative deamination of peptidyl lysine residues in precursors to fibrous collagen and elastin. Regulator of Ras expression. May play a role in tumor suppression. Plays a role in the aortic wall architecture. This Sus scrofa (Pig) protein is Protein-lysine 6-oxidase.